A 286-amino-acid polypeptide reads, in one-letter code: Energy-coupling factor transporter ATP-binding protein EcfA2 (286 aa).

Residues 3-246 (IRFDNVSYTY…KEKLADWHIA (244 aa)) form the ABC transporter domain. ATP is bound at residue 40 to 47 (GQTGSGKS).

This sequence belongs to the ABC transporter superfamily. Energy-coupling factor EcfA family. As to quaternary structure, forms a stable energy-coupling factor (ECF) transporter complex composed of 2 membrane-embedded substrate-binding proteins (S component), 2 ATP-binding proteins (A component) and 2 transmembrane proteins (T component).

The protein localises to the cell membrane. Functionally, ATP-binding (A) component of a common energy-coupling factor (ECF) ABC-transporter complex. Unlike classic ABC transporters this ECF transporter provides the energy necessary to transport a number of different substrates. The polypeptide is Energy-coupling factor transporter ATP-binding protein EcfA2 (Staphylococcus aureus (strain bovine RF122 / ET3-1)).